A 157-amino-acid chain; its full sequence is UPF0251 protein CLJ_B1488 (157 aa).

Belongs to the UPF0251 family.

The chain is UPF0251 protein CLJ_B1488 from Clostridium botulinum (strain 657 / Type Ba4).